The sequence spans 275 residues: Elongation factor Ts (275 aa).

The tract at residues Thr80–Val83 is involved in Mg(2+) ion dislocation from EF-Tu.

It belongs to the EF-Ts family.

It localises to the cytoplasm. Associates with the EF-Tu.GDP complex and induces the exchange of GDP to GTP. It remains bound to the aminoacyl-tRNA.EF-Tu.GTP complex up to the GTP hydrolysis stage on the ribosome. The chain is Elongation factor Ts from Clavibacter michiganensis subsp. michiganensis (strain NCPPB 382).